The primary structure comprises 438 residues: Nucleolar protein 12 (438 aa).

Disordered stretches follow at residues 1-28 (MGETNSSLDNENTSFVGKLSSSSNVDPT) and 60-94 (ANGVEEAAETIESDTKEVQNIKPKSKKKKKKLNDS). Acidic residues predominate over residues 60 to 71 (ANGVEEAAETIE). Phosphoserine occurs at positions 94 and 95. A disordered region spans residues 108–146 (AEEDEEKDKDSAGLINDEEDKSPAKQSVLEERTSQEDVK). Residues 135 to 146 (VLEERTSQEDVK) are compositionally biased toward basic and acidic residues. 2 RRM domains span residues 164–262 (KTVF…SVSH) and 270–348 (RCVF…RAKS). Basic residues-rich tracts occupy residues 346–357 (AKSTKPKSITRS) and 402–412 (AKKKVNKKRKE). Disordered stretches follow at residues 346–366 (AKSTKPKSITRSKRGDEKTRT) and 390–438 (EGHR…KKDK).

The protein belongs to the RRM RBM34 family.

The protein resides in the nucleus. Its subcellular location is the nucleolus. Involved in pre-25S rRNA processing. The sequence is that of Nucleolar protein 12 (nop12) from Schizosaccharomyces pombe (strain 972 / ATCC 24843) (Fission yeast).